The chain runs to 178 residues: Large ribosomal subunit protein bL25 (178 aa).

This sequence belongs to the bacterial ribosomal protein bL25 family. CTC subfamily. Part of the 50S ribosomal subunit; part of the 5S rRNA/L5/L18/L25 subcomplex. Contacts the 5S rRNA. Binds to the 5S rRNA independently of L5 and L18.

Its function is as follows. This is one of the proteins that binds to the 5S RNA in the ribosome where it forms part of the central protuberance. This is Large ribosomal subunit protein bL25 from Wolinella succinogenes (strain ATCC 29543 / DSM 1740 / CCUG 13145 / JCM 31913 / LMG 7466 / NCTC 11488 / FDC 602W) (Vibrio succinogenes).